Consider the following 130-residue polypeptide: Large ribosomal subunit protein eL32 (130 aa).

It belongs to the eukaryotic ribosomal protein eL32 family.

The sequence is that of Large ribosomal subunit protein eL32 (rpl32e) from Pyrococcus horikoshii (strain ATCC 700860 / DSM 12428 / JCM 9974 / NBRC 100139 / OT-3).